The chain runs to 172 residues: Photosystem I assembly protein Ycf3 (172 aa).

TPR repeat units follow at residues 35-68, 72-105, and 120-153; these read AFSY…EEDP, SYIL…NSQL, and GVKA…SPNN.

Belongs to the Ycf3 family.

It localises to the plastid. Its subcellular location is the chloroplast thylakoid membrane. Its function is as follows. Essential for the assembly of the photosystem I (PSI) complex. May act as a chaperone-like factor to guide the assembly of the PSI subunits. In Guillardia theta (Cryptophyte), this protein is Photosystem I assembly protein Ycf3.